The primary structure comprises 170 residues: Tubulin polymerization-promoting protein family member 2 (170 aa).

Residues 105-117 show a composition bias toward low complexity; it reads TTGVTKSTTVGGV. A disordered region spans residues 105-170; that stretch reads TTGVTKSTTV…GAGTYDKKNQ (66 aa). Residues 129-149 are compositionally biased toward basic and acidic residues; it reads THKERFDESGKGKGIEGREET.

This sequence belongs to the TPPP family. Only expressed in male reproductive organs, including testis. Expressed in elongating spermatids at stages IV-VIII of the seminiferous epithelial cycle in testis and in mature sperm in the epididymis.

It is found in the cytoplasm. The protein localises to the cytosol. The protein resides in the cell projection. It localises to the cilium. Its subcellular location is the flagellum. Functionally, probable regulator of microtubule dynamics required for sperm motility. In contrast to other members of the family, has no microtubule bundling activity. The protein is Tubulin polymerization-promoting protein family member 2 of Mus musculus (Mouse).